The chain runs to 85 residues: Small ribosomal subunit protein bS20 (85 aa).

This sequence belongs to the bacterial ribosomal protein bS20 family.

Its function is as follows. Binds directly to 16S ribosomal RNA. The protein is Small ribosomal subunit protein bS20 of Borrelia turicatae (strain 91E135).